We begin with the raw amino-acid sequence, 545 residues long: CTP synthase (545 aa).

Positions 1-266 (MTTNYIFVTG…DDYICKRFSL (266 aa)) are amidoligase domain. Residue S14 coordinates CTP. UTP is bound at residue S14. Residues 15–20 (SLGKGI) and D72 each bind ATP. Mg(2+)-binding residues include D72 and E140. CTP contacts are provided by residues 147 to 149 (DIE), 187 to 192 (KTKPTQ), and K223. UTP is bound by residues 187–192 (KTKPTQ) and K223. Position 239–241 (239–241 (KDV)) interacts with ATP. The 252-residue stretch at 291–542 (TIGMVGKYIE…VKAANEHQKR (252 aa)) folds into the Glutamine amidotransferase type-1 domain. G352 contacts L-glutamine. C379 acts as the Nucleophile; for glutamine hydrolysis in catalysis. Residues 380-383 (LGMQ), E403, and R470 each bind L-glutamine. Active-site residues include H515 and E517.

It belongs to the CTP synthase family. In terms of assembly, homotetramer.

The catalysed reaction is UTP + L-glutamine + ATP + H2O = CTP + L-glutamate + ADP + phosphate + 2 H(+). It carries out the reaction L-glutamine + H2O = L-glutamate + NH4(+). The enzyme catalyses UTP + NH4(+) + ATP = CTP + ADP + phosphate + 2 H(+). It functions in the pathway pyrimidine metabolism; CTP biosynthesis via de novo pathway; CTP from UDP: step 2/2. With respect to regulation, allosterically activated by GTP, when glutamine is the substrate; GTP has no effect on the reaction when ammonia is the substrate. The allosteric effector GTP functions by stabilizing the protein conformation that binds the tetrahedral intermediate(s) formed during glutamine hydrolysis. Inhibited by the product CTP, via allosteric rather than competitive inhibition. Its function is as follows. Catalyzes the ATP-dependent amination of UTP to CTP with either L-glutamine or ammonia as the source of nitrogen. Regulates intracellular CTP levels through interactions with the four ribonucleotide triphosphates. The sequence is that of CTP synthase from Salmonella newport (strain SL254).